The chain runs to 1298 residues: DNA-directed RNA polymerase subunit beta' (1298 aa).

Residues C60, C62, C75, and C78 each contribute to the Zn(2+) site. 3 residues coordinate Mg(2+): D535, D537, and D539. Zn(2+) contacts are provided by C877, C954, C961, and C964.

Belongs to the RNA polymerase beta' chain family. As to quaternary structure, the RNAP catalytic core consists of 2 alpha, 1 beta, 1 beta' and 1 omega subunit. When a sigma factor is associated with the core the holoenzyme is formed, which can initiate transcription. Mg(2+) serves as cofactor. Requires Zn(2+) as cofactor.

It catalyses the reaction RNA(n) + a ribonucleoside 5'-triphosphate = RNA(n+1) + diphosphate. DNA-dependent RNA polymerase catalyzes the transcription of DNA into RNA using the four ribonucleoside triphosphates as substrates. This Micrococcus luteus (strain ATCC 4698 / DSM 20030 / JCM 1464 / CCM 169 / CCUG 5858 / IAM 1056 / NBRC 3333 / NCIMB 9278 / NCTC 2665 / VKM Ac-2230) (Micrococcus lysodeikticus) protein is DNA-directed RNA polymerase subunit beta'.